We begin with the raw amino-acid sequence, 133 residues long: Bacteriohemerythrin (133 aa).

Positions 19, 56, 60, 75, 79, 115, and 120 each coordinate Fe cation.

This sequence belongs to the hemerythrin family. In terms of assembly, monomer.

Oxygen-binding protein. May be involved in a storage mechanism or for delivery to oxygen-requiring enzymes. The oxygen-binding site contains two iron atoms. This is Bacteriohemerythrin from Campylobacter jejuni subsp. jejuni serotype O:6 (strain 81116 / NCTC 11828).